Reading from the N-terminus, the 428-residue chain is Dihydrolipoyllysine-residue acetyltransferase component of pyruvate dehydrogenase complex (428 aa).

Residues 2 to 77 (AFEFKLPDIG…TVGQTLITLD (76 aa)) form the Lipoyl-binding domain. At Lys43 the chain carries N6-lipoyllysine. Positions 88–123 (GQEQEEAKKEEKTETVSKEEKVDAVAPNAPAAEAEA) are disordered. The segment covering 89–110 (QEQEEAKKEEKTETVSKEEKVD) has biased composition (basic and acidic residues). Over residues 111-123 (AVAPNAPAAEAEA) the composition is skewed to low complexity. The 38-residue stretch at 130-167 (IAMPSVRKYAREKGVDIRLVQGTGKNGRVLKEDIDAFL) folds into the Peripheral subunit-binding (PSBD) domain. A compositionally biased stretch (low complexity) spans 177–194 (AAEEKAAPAAAKPATTEG). Residues 177–201 (AAEEKAAPAAAKPATTEGEFPETRE) form a disordered region. His399 is an active-site residue.

Belongs to the 2-oxoacid dehydrogenase family. In terms of assembly, forms a 60-polypeptide structural core with icosahedral symmetry. (R)-lipoate is required as a cofactor.

The catalysed reaction is N(6)-[(R)-dihydrolipoyl]-L-lysyl-[protein] + acetyl-CoA = N(6)-[(R)-S(8)-acetyldihydrolipoyl]-L-lysyl-[protein] + CoA. Functionally, the pyruvate dehydrogenase complex catalyzes the overall conversion of pyruvate to acetyl-CoA and CO(2). It contains multiple copies of three enzymatic components: pyruvate dehydrogenase (E1), dihydrolipoamide acetyltransferase (E2) and lipoamide dehydrogenase (E3). This chain is Dihydrolipoyllysine-residue acetyltransferase component of pyruvate dehydrogenase complex (pdhC), found in Geobacillus stearothermophilus (Bacillus stearothermophilus).